Here is a 582-residue protein sequence, read N- to C-terminus: Formate--tetrahydrofolate ligase (582 aa).

65–72 serves as a coordination point for ATP; it reads TPLGEGKT.

Belongs to the formate--tetrahydrofolate ligase family.

It carries out the reaction (6S)-5,6,7,8-tetrahydrofolate + formate + ATP = (6R)-10-formyltetrahydrofolate + ADP + phosphate. It participates in one-carbon metabolism; tetrahydrofolate interconversion. The protein is Formate--tetrahydrofolate ligase of Vibrio campbellii (strain ATCC BAA-1116).